A 278-amino-acid polypeptide reads, in one-letter code: Protein EXORDIUM-like 4 (278 aa).

An N-terminal signal peptide occupies residues 1 to 23; it reads MAYNYRFAILLVLLSATVGFTAA. Residue Asn35 is glycosylated (N-linked (GlcNAc...) asparagine).

Belongs to the EXORDIUM family.

Its subcellular location is the secreted. The protein resides in the extracellular space. It localises to the apoplast. May play a role in a brassinosteroid-dependent regulation of growth and development. This Arabidopsis thaliana (Mouse-ear cress) protein is Protein EXORDIUM-like 4 (EXL4).